A 436-amino-acid chain; its full sequence is uncharacterized protein (436 aa).

The chain crosses the membrane as a helical span at residues 1–21 (MILLQVICTIWTCLFIPLLNA). 2 BNR repeats span residues 57–68 (WISSDSGENWEA) and 101–112 (YVTDDRGKSWRA). Asn-157 carries an N-linked (GlcNAc...) asparagine glycan. BNR repeat units lie at residues 229–240 (ALSTDGGKTFKK) and 394–405 (KISVDNGLTWSN).

It is found in the membrane. This is an uncharacterized protein from Saccharomyces cerevisiae (strain ATCC 204508 / S288c) (Baker's yeast).